Consider the following 84-residue polypeptide: Large ribosomal subunit protein bL31B (84 aa).

The protein belongs to the bacterial ribosomal protein bL31 family. Type B subfamily. As to quaternary structure, part of the 50S ribosomal subunit.

This is Large ribosomal subunit protein bL31B from Streptomyces griseus subsp. griseus (strain JCM 4626 / CBS 651.72 / NBRC 13350 / KCC S-0626 / ISP 5235).